A 719-amino-acid polypeptide reads, in one-letter code: Fusicoccadiene synthase (719 aa).

The tract at residues Met-1 to Lys-334 is fusicocca-2,10(14)-diene synthase. The Mg(2+) site is built by Asp-92 and Asp-96. Residues Thr-335 to Val-719 are geranylgeranyl diphosphate synthase. Residues Glu-358–Gly-404 form a disordered region. Residues Asp-378–His-400 show a composition bias toward polar residues. The isopentenyl diphosphate site is built by Lys-435, Arg-438, and His-467. Asp-474 and Asp-478 together coordinate Mg(2+). A dimethylallyl diphosphate-binding site is contributed by Arg-483. Position 484 (Arg-484) interacts with isopentenyl diphosphate. Dimethylallyl diphosphate contacts are provided by Lys-561, Thr-562, Gln-602, Asn-609, Lys-619, and Lys-629.

In the N-terminal section; belongs to the terpene synthase family. It in the C-terminal section; belongs to the FPP/GGPP synthase family. As to quaternary structure, hexamer.

It carries out the reaction geranylgeranyl diphosphate = fusicocca-2,10(14)-diene + diphosphate. The catalysed reaction is isopentenyl diphosphate + (2E,6E)-farnesyl diphosphate = (2E,6E,10E)-geranylgeranyl diphosphate + diphosphate. It participates in mycotoxin biosynthesis. Multifunctional diterpene synthase; part of the 2 gene clusters that mediate the biosynthesis of fusicoccins, diterpene glucosides that display phytohormone-like activity and function as potent activators of plasma membrane H(+)-ATPases in plants by modifying 14-3-3 proteins and cause the plant disease constriction canker. The first step in the pathway is performed by the fusicoccadiene synthase PaFS that possesses both prenyl transferase and terpene cyclase activity, converting isopentenyl diphosphate and dimethylallyl diphosphate into geranylgeranyl diphosphate (GGDP) and successively converting GGDP into fusicocca-2,10(14)-diene, a precursor for fusicoccin H. Fusicoccadiene synthase is an allosteric enzyme for GGPP cyclization that generates 64% fusicoccadiene, 9% delta-araneosene, and one additional unidentified diterpene product, when incubated with GGPP. In the absence of isopentenyl diphosphate (IPP), PaFS can also solvolyze the shorter chain geranyl diphosphate (GPP) and farnesyl diphosphate (FPP) as alternative substrates to yield predominantly acyclic products. FPP is converted to farnesol (60.5%), nerolidol (14.0%), and farnesene (14.0%), while GPP is converted to a mixture of geraniol (59.5%) and linalool (35.0%). The second step is the oxidation at the C-8 position by the cytochrome P450 monooxygenase PaP450-2 to yield fusicocca-2,10(14)-diene-8-beta-ol. The cytochrome P450 monooxygenase PaP450-1 then catalyzes the hydroxylation at the C-16 position to produce fusicocca-2,10(14)-diene-8-beta,16-diol. The dioxygenase fc-dox then catalyzes the 16-oxydation of fusicocca-2,10(14)-diene-8-beta,16-diol to yield an aldehyde (8-beta-hydroxyfusicocca-1,10(14)-dien-16-al). The short-chain dehydrogenase/reductase fc-sdr catalyzes the reduction of the aldehyde to yield fusicocca-1,10(14)-diene-8-beta,16-diol. The next step is the hydroxylation at C-9 performed by the cytochrome P450 monooxygenase PaP450-3 that leads to fusicoccin H aglycon which is glycosylated to fusicoccin H by the O-glycosyltransferase PAGT. Hydroxylation at C-12 by the cytochrome P450 monooxygenase PaP450-4 leads then to the production of fusicoccin Q and is followed by methylation by the O-methyltransferase PAMT to yield fusicoccin P. Fusicoccin P is further converted to fusicoccin J via prenylation by the O-glucose prenyltransferase PaPT. Cytochrome P450 monooxygenase PaP450-5 then performs hydroxylation at C-19 to yield dideacetyl-fusicoccin A which is acetylated to 3'-O-deacetyl-fusicoccin A by the O-acetyltransferase PaAT-2. Finally, a another acetylation by the O-acetyltransferase PaAT-1 yields fusicoccin A. In Phomopsis amygdali (Fusicoccum amygdali), this protein is Fusicoccadiene synthase.